The sequence spans 586 residues: CTP synthase (586 aa).

The tract at residues 1–278 (MRKHPQTATK…DAFVVRRLNL (278 aa)) is amidoligase domain. Residue serine 20 participates in CTP binding. Serine 20 is a binding site for UTP. ATP-binding positions include 21–26 (SLGKGL) and aspartate 78. Aspartate 78 and glutamate 152 together coordinate Mg(2+). CTP-binding positions include 159–161 (DIE), 199–204 (KTKPTQ), and lysine 235. Residues 199 to 204 (KTKPTQ) and lysine 235 contribute to the UTP site. One can recognise a Glutamine amidotransferase type-1 domain in the interval 303 to 551 (RIALVGKYVE…VGAAIDYKAG (249 aa)). Glycine 366 is a binding site for L-glutamine. Cysteine 393 (nucleophile; for glutamine hydrolysis) is an active-site residue. Residues 394-397 (LGLQ), glutamate 416, and arginine 477 contribute to the L-glutamine site. Catalysis depends on residues histidine 524 and glutamate 526. Positions 560 to 586 (EIPEHTPNGSSHRDGVGQPLPEPASRG) are disordered.

The protein belongs to the CTP synthase family. In terms of assembly, homotetramer.

It carries out the reaction UTP + L-glutamine + ATP + H2O = CTP + L-glutamate + ADP + phosphate + 2 H(+). It catalyses the reaction L-glutamine + H2O = L-glutamate + NH4(+). The enzyme catalyses UTP + NH4(+) + ATP = CTP + ADP + phosphate + 2 H(+). The protein operates within pyrimidine metabolism; CTP biosynthesis via de novo pathway; CTP from UDP: step 2/2. Allosterically activated by GTP, when glutamine is the substrate; GTP has no effect on the reaction when ammonia is the substrate. The allosteric effector GTP functions by stabilizing the protein conformation that binds the tetrahedral intermediate(s) formed during glutamine hydrolysis. Inhibited by the product CTP, via allosteric rather than competitive inhibition. Its function is as follows. Catalyzes the ATP-dependent amination of UTP to CTP with either L-glutamine or ammonia as the source of nitrogen. Regulates intracellular CTP levels through interactions with the four ribonucleotide triphosphates. This Mycobacterium tuberculosis (strain CDC 1551 / Oshkosh) protein is CTP synthase.